The sequence spans 196 residues: Proteasome subunit beta 1 (196 aa).

Residues 1–6 (MEKKTG) constitute a propeptide, removed in mature form; by autocatalysis. Thr7 serves as the catalytic Nucleophile.

This sequence belongs to the peptidase T1B family. In terms of assembly, the 20S proteasome core is composed of 14 alpha and 14 beta subunits that assemble into four stacked heptameric rings, resulting in a barrel-shaped structure. The two inner rings, each composed of seven catalytic beta subunits, are sandwiched by two outer rings, each composed of seven alpha subunits. The catalytic chamber with the active sites is on the inside of the barrel. Has a gated structure, the ends of the cylinder being occluded by the N-termini of the alpha-subunits. Is capped at one or both ends by the proteasome regulatory ATPase, PAN.

The protein resides in the cytoplasm. The enzyme catalyses Cleavage of peptide bonds with very broad specificity.. The formation of the proteasomal ATPase PAN-20S proteasome complex, via the docking of the C-termini of PAN into the intersubunit pockets in the alpha-rings, triggers opening of the gate for substrate entry. Interconversion between the open-gate and close-gate conformations leads to a dynamic regulation of the 20S proteasome proteolysis activity. Its function is as follows. Component of the proteasome core, a large protease complex with broad specificity involved in protein degradation. This is Proteasome subunit beta 1 from Pyrococcus furiosus (strain ATCC 43587 / DSM 3638 / JCM 8422 / Vc1).